The chain runs to 256 residues: F-actin-capping protein subunit alpha (256 aa).

A Phosphoserine modification is found at S31.

The protein belongs to the F-actin-capping protein alpha subunit family. In terms of assembly, component of the F-actin capping complex, composed of a heterodimer of an alpha and a beta subunit.

It is found in the cytoplasm. Its subcellular location is the cytoskeleton. The protein resides in the actin patch. In terms of biological role, F-actin-capping proteins bind in a Ca(2+)-independent manner to the fast growing ends of actin filaments (barbed end) thereby blocking the exchange of subunits at these ends. Unlike other capping proteins (such as gelsolin and severin), these proteins do not sever actin filaments. Competes with formin cdc12 for attachment to the actin filaments barbed ends. Slowly replaces cdc12 on the barbed ends in preparation for filament disassembly during contractile ring constriction. This Schizosaccharomyces pombe (strain 972 / ATCC 24843) (Fission yeast) protein is F-actin-capping protein subunit alpha (acp1).